Here is a 636-residue protein sequence, read N- to C-terminus: MLSTRTAAVAASASPASPWKLGGRSEGGASCDGCRTYRNTLRRRAAPAKVRALPPRRVDAVAMVSNAETETEKEQEEAAAASEELPVMPWATSVASGYTLLRDPHHNKGLAFTEEERDGHYLRGLLPPAVLSQELQIKKFMNTLRQYQTPLQRYIAMMNLQETDERLFYKLLIDNVVELLPFVYTPTVGEACQKYGSIFGRPQGLYVSLKDKGKVLEVLRNWPHRNIQVICVTDGERILGLGDLGCQGMGIPVGKLALYTALGGVDPSVCLPITIDVGTNNEFLLNDEFYIGLRQKRATGEEYDELIEEFMSAVKQFYGEKVLIQFEDFANHNAFDLLEKYSKSHLVFNDDIQGTASVVLAGLLAALKMVGGTLAEQTYLFLGAGEAGTGIAELIALEISKQTNAPIEECRKKVWLVDSKGLIVDSRKGSLQPFKKPWAHEHEPLKTLYDAVQSIKPTVLIGTSGVGRTFTKEIIEAMSSFNERPIIFSLSNPTSHSECTAEQAYTWSQGRSIFASGSPFAPVEYEGKTFVPGQSNNAYIFPGLGLGLVISGAVRVHEDMLLAASKALADQATQDNFEKGSIFPPFTSIRKISAHIAAAVAGKAYELGLATRLPPPSDLVKYAENCMYTPVYRNYR.

Positions 1 to 28 (MLSTRTAAVAASASPASPWKLGGRSEGG) are disordered. The transit peptide at 1–62 (MLSTRTAAVA…LPPRRVDAVA (62 aa)) directs the protein to the chloroplast. The span at 7-18 (AAVAASASPASP) shows a compositional bias: low complexity. Tyrosine 184 (proton donor) is an active-site residue. An NAD(+)-binding site is contributed by arginine 237. Lysine 255 functions as the Proton acceptor in the catalytic mechanism. A divalent metal cation is bound by residues glutamate 327, aspartate 328, and aspartate 351. Aspartate 351 serves as a coordination point for NAD(+). Residue 380 to 396 (LFLGAGEAGTGIAELIA) participates in NADP(+) binding. Asparagine 492 lines the NAD(+) pocket.

It belongs to the malic enzymes family. In terms of assembly, homotetramer. Mg(2+) is required as a cofactor. It depends on Mn(2+) as a cofactor.

The protein localises to the plastid. The protein resides in the chloroplast. It catalyses the reaction (S)-malate + NADP(+) = pyruvate + CO2 + NADPH. It carries out the reaction oxaloacetate + H(+) = pyruvate + CO2. Its pathway is photosynthesis; C4 acid pathway. In terms of biological role, the chloroplastic ME isoform decarboxylates malate shuttled from neighboring mesophyll cells. The CO(2) released is then refixed by ribulose-bisphosphate carboxylase. This pathway eliminates the photorespiratory loss of CO(2) that occurs in most plants. The polypeptide is NADP-dependent malic enzyme, chloroplastic (MOD1) (Zea mays (Maize)).